Consider the following 224-residue polypeptide: Metalloproteinase inhibitor 4 (224 aa).

Positions 1–29 are cleaved as a signal peptide; the sequence is MPWSPLAALSWALVLRLLALLWPPGRGEA. Cys-30 serves as a coordination point for Zn(2+). 2 involved in metalloproteinase-binding regions span residues 30–33 and 99–100; these read CSCA and SS. Intrachain disulfides connect Cys-30/Cys-102, Cys-32/Cys-131, Cys-42/Cys-156, Cys-158/Cys-205, Cys-163/Cys-168, and Cys-176/Cys-197. The NTR domain maps to 30 to 156; it reads CSCAPAHPQQ…SLNHHYHQNC (127 aa).

This sequence belongs to the protease inhibitor I35 (TIMP) family. As to expression, expressed in retina, smooth muscle, skin, pancreas, skeletal muscle, heart, brain, lung, kidney and testis. Not found in cartilage, spleen and liver.

The protein localises to the secreted. Functionally, complexes with metalloproteinases (such as collagenases) and irreversibly inactivates them by binding to their catalytic zinc cofactor. This Rattus norvegicus (Rat) protein is Metalloproteinase inhibitor 4 (Timp4).